The chain runs to 177 residues: Ubiquinol-cytochrome c reductase iron-sulfur subunit (177 aa).

The helical transmembrane segment at 18-38 threads the bilayer; the sequence is MVLTASSVAAIGAVCTLWPLV. The 88-residue stretch at 88–175 folds into the Rieske domain; that stretch reads ARAVKMSELI…YTFISDKKIR (88 aa). 4 residues coordinate [2Fe-2S] cluster: Cys-120, His-122, Cys-139, and His-142. A disulfide bridge connects residues Cys-125 and Cys-141.

Belongs to the Rieske iron-sulfur protein family. In terms of assembly, the main subunits of complex b-c1 are: cytochrome b, cytochrome c1 and the Rieske protein. It depends on [2Fe-2S] cluster as a cofactor.

The protein localises to the cell membrane. The enzyme catalyses a quinol + 2 Fe(III)-[cytochrome c](out) = a quinone + 2 Fe(II)-[cytochrome c](out) + 2 H(+)(out). In terms of biological role, component of the ubiquinol-cytochrome c reductase complex (complex III or cytochrome b-c1 complex), which is a respiratory chain that generates an electrochemical potential coupled to ATP synthesis. The polypeptide is Ubiquinol-cytochrome c reductase iron-sulfur subunit (petA) (Rickettsia conorii (strain ATCC VR-613 / Malish 7)).